Reading from the N-terminus, the 910-residue chain is Alanine--tRNA ligase (910 aa).

Basic and acidic residues predominate over residues 488 to 505 (RHEEKKEDSKSEKGENTA). Residues 488 to 507 (RHEEKKEDSKSEKGENTAEK) form a disordered region. Histidine 614, histidine 618, cysteine 718, and histidine 722 together coordinate Zn(2+).

This sequence belongs to the class-II aminoacyl-tRNA synthetase family. It depends on Zn(2+) as a cofactor.

It is found in the cytoplasm. The catalysed reaction is tRNA(Ala) + L-alanine + ATP = L-alanyl-tRNA(Ala) + AMP + diphosphate. Its function is as follows. Catalyzes the attachment of alanine to tRNA(Ala) in a two-step reaction: alanine is first activated by ATP to form Ala-AMP and then transferred to the acceptor end of tRNA(Ala). Also edits incorrectly charged Ser-tRNA(Ala) and Gly-tRNA(Ala) via its editing domain. This chain is Alanine--tRNA ligase, found in Methanococcus aeolicus (strain ATCC BAA-1280 / DSM 17508 / OCM 812 / Nankai-3).